The following is a 267-amino-acid chain: Tryptophan synthase alpha chain (267 aa).

Active-site proton acceptor residues include Glu-49 and Asp-60.

This sequence belongs to the TrpA family. In terms of assembly, tetramer of two alpha and two beta chains.

It catalyses the reaction (1S,2R)-1-C-(indol-3-yl)glycerol 3-phosphate + L-serine = D-glyceraldehyde 3-phosphate + L-tryptophan + H2O. The protein operates within amino-acid biosynthesis; L-tryptophan biosynthesis; L-tryptophan from chorismate: step 5/5. Its function is as follows. The alpha subunit is responsible for the aldol cleavage of indoleglycerol phosphate to indole and glyceraldehyde 3-phosphate. The sequence is that of Tryptophan synthase alpha chain from Citrifermentans bemidjiense (strain ATCC BAA-1014 / DSM 16622 / JCM 12645 / Bem) (Geobacter bemidjiensis).